Reading from the N-terminus, the 547-residue chain is GMP synthase [glutamine-hydrolyzing] (547 aa).

The region spanning 12–210 (KILILDFGSQ…VLDIAGAKPD (199 aa)) is the Glutamine amidotransferase type-1 domain. The active-site Nucleophile is the Cys89. Active-site residues include His184 and Glu186. The GMPS ATP-PPase domain maps to 211–403 (WIMRDHIEEA…LGLPAEMVYR (193 aa)). 238–244 (SGGVDSS) contacts ATP.

Homodimer.

The catalysed reaction is XMP + L-glutamine + ATP + H2O = GMP + L-glutamate + AMP + diphosphate + 2 H(+). It participates in purine metabolism; GMP biosynthesis; GMP from XMP (L-Gln route): step 1/1. In terms of biological role, catalyzes the synthesis of GMP from XMP. The sequence is that of GMP synthase [glutamine-hydrolyzing] from Burkholderia pseudomallei (strain 1710b).